The primary structure comprises 833 residues: Protein translocase subunit SecA (833 aa).

Residues Gln-87, Gly-105 to Thr-109, and Asp-494 contribute to the ATP site. A disordered region spans residues Pro-789–Asn-816. Over residues Pro-806–Arg-815 the composition is skewed to basic and acidic residues. Zn(2+)-binding residues include Cys-819, Cys-821, Cys-830, and Cys-831.

Belongs to the SecA family. Monomer and homodimer. Part of the essential Sec protein translocation apparatus which comprises SecA, SecYEG and auxiliary proteins SecDF-YajC and YidC. Requires Zn(2+) as cofactor.

The protein resides in the cell inner membrane. It is found in the cytoplasm. It carries out the reaction ATP + H2O + cellular proteinSide 1 = ADP + phosphate + cellular proteinSide 2.. Its function is as follows. Part of the Sec protein translocase complex. Interacts with the SecYEG preprotein conducting channel. Has a central role in coupling the hydrolysis of ATP to the transfer of proteins into and across the cell membrane, serving as an ATP-driven molecular motor driving the stepwise translocation of polypeptide chains across the membrane. In Nitratidesulfovibrio vulgaris (strain ATCC 29579 / DSM 644 / CCUG 34227 / NCIMB 8303 / VKM B-1760 / Hildenborough) (Desulfovibrio vulgaris), this protein is Protein translocase subunit SecA.